The primary structure comprises 337 residues: MIQQALTRLLDRHDLARAEMSAVMDEIADGGATPAQVGAFLAALRLKGETVEEIAGAAEVMRARVDPIRVDRDVFVDTCGTGGDGRHTFNISTTAAFIVAGAGVTVAKHGNRAVSSRSGSADVLAALGVDVDAAKDVVERAIEEVGIGFLFAPRLHPAFKAVAGIRRELGVRTVFNLLGPLANPAGARYQVLGVYEPRWVPILGGVLAALGAAHAFVVHGEGLDEIAVTGMTHVCEVRAGECERYAMVPEDLGLRRHEEAEIAGGDADRNARILADVLAGQQGGPRDAALANAAAALVAAGAAADLREGVRLGAEAVDRGAASDKLARLVAVTRGGA.

Residues glycine 80, 83 to 84, threonine 88, 90 to 93, 108 to 116, and serine 120 contribute to the 5-phospho-alpha-D-ribose 1-diphosphate site; these read GD, NIST, and KHGNRAVSS. An anthranilate-binding site is contributed by glycine 80. Serine 92 provides a ligand contact to Mg(2+). Asparagine 111 is a binding site for anthranilate. Residue arginine 166 coordinates anthranilate. Aspartate 224 and glutamate 225 together coordinate Mg(2+).

It belongs to the anthranilate phosphoribosyltransferase family. In terms of assembly, homodimer. Mg(2+) serves as cofactor.

It catalyses the reaction N-(5-phospho-beta-D-ribosyl)anthranilate + diphosphate = 5-phospho-alpha-D-ribose 1-diphosphate + anthranilate. It participates in amino-acid biosynthesis; L-tryptophan biosynthesis; L-tryptophan from chorismate: step 2/5. In terms of biological role, catalyzes the transfer of the phosphoribosyl group of 5-phosphorylribose-1-pyrophosphate (PRPP) to anthranilate to yield N-(5'-phosphoribosyl)-anthranilate (PRA). The sequence is that of Anthranilate phosphoribosyltransferase from Anaeromyxobacter sp. (strain Fw109-5).